The sequence spans 670 residues: DNA ligase (670 aa).

Residues 32 to 36 (DAEYD), 81 to 82 (SL), and Glu111 contribute to the NAD(+) site. Lys113 serves as the catalytic N6-AMP-lysine intermediate. NAD(+) contacts are provided by Arg134, Glu171, Lys290, and Lys314. Zn(2+)-binding residues include Cys408, Cys411, Cys426, and Cys432. The region spanning 591 to 670 (EEALSLKGQT…DGLLAVLAGE (80 aa)) is the BRCT domain.

This sequence belongs to the NAD-dependent DNA ligase family. LigA subfamily. Mg(2+) serves as cofactor. The cofactor is Mn(2+).

It carries out the reaction NAD(+) + (deoxyribonucleotide)n-3'-hydroxyl + 5'-phospho-(deoxyribonucleotide)m = (deoxyribonucleotide)n+m + AMP + beta-nicotinamide D-nucleotide.. Functionally, DNA ligase that catalyzes the formation of phosphodiester linkages between 5'-phosphoryl and 3'-hydroxyl groups in double-stranded DNA using NAD as a coenzyme and as the energy source for the reaction. It is essential for DNA replication and repair of damaged DNA. The protein is DNA ligase of Shewanella sediminis (strain HAW-EB3).